We begin with the raw amino-acid sequence, 301 residues long: NADH-cytochrome b5 reductase 3 (301 aa).

Residue Gly-2 is the site of N-myristoyl glycine attachment. An FAD-binding FR-type domain is found at 40 to 152 (DIKYPLRLID…RGPNGLLVYQ (113 aa)). At Lys-42 the chain carries N6-acetyllysine. Residue Tyr-43 is modified to Phosphotyrosine. An N6-acetyllysine modification is found at Lys-50. FAD-binding residues include Arg-92, Pro-93, Tyr-94, Val-109, Lys-111, and Phe-114. N6-acetyllysine is present on Lys-120. The FAD site is built by Lys-126, Met-127, Ser-128, and Thr-185.

This sequence belongs to the flavoprotein pyridine nucleotide cytochrome reductase family. In terms of assembly, component of a complex composed of cytochrome b5, NADH-cytochrome b5 reductase (CYB5R3) and MTARC2. Interacts with MTLN; the interaction is required to maintain cellular lipid composition and leads to stimulation of mitochondrial respiratory complex I activity. The cofactor is FAD.

The protein localises to the endoplasmic reticulum membrane. It is found in the mitochondrion outer membrane. The enzyme catalyses 2 Fe(III)-[cytochrome b5] + NADH = 2 Fe(II)-[cytochrome b5] + NAD(+) + H(+). Catalyzes the reduction of two molecules of cytochrome b5 using NADH as the electron donor. In Bos taurus (Bovine), this protein is NADH-cytochrome b5 reductase 3 (CYB5R3).